Consider the following 1290-residue polypeptide: DNA-directed RNA polymerase subunit beta' (1290 aa).

The Zn(2+) site is built by cysteine 60, cysteine 62, cysteine 75, and cysteine 78. Mg(2+) contacts are provided by aspartate 535, aspartate 537, and aspartate 539. Cysteine 875, cysteine 953, cysteine 960, and cysteine 963 together coordinate Zn(2+).

It belongs to the RNA polymerase beta' chain family. As to quaternary structure, the RNAP catalytic core consists of 2 alpha, 1 beta, 1 beta' and 1 omega subunit. When a sigma factor is associated with the core the holoenzyme is formed, which can initiate transcription. Mg(2+) is required as a cofactor. Zn(2+) serves as cofactor.

The catalysed reaction is RNA(n) + a ribonucleoside 5'-triphosphate = RNA(n+1) + diphosphate. Its function is as follows. DNA-dependent RNA polymerase catalyzes the transcription of DNA into RNA using the four ribonucleoside triphosphates as substrates. This chain is DNA-directed RNA polymerase subunit beta', found in Nocardioides sp. (strain ATCC BAA-499 / JS614).